Here is a 238-residue protein sequence, read N- to C-terminus: Opacity protein opA60 (238 aa).

A signal peptide is located at residue Ala-1.

This sequence belongs to the opacity porin family.

The protein localises to the cell outer membrane. Implicated in a number of adherence functions. OPA proteins are implicated in pathogenesis and are subject to phase variation. This Neisseria gonorrhoeae protein is Opacity protein opA60 (opaH).